A 941-amino-acid polypeptide reads, in one-letter code: ATP-dependent 6-phosphofructokinase subunit beta (941 aa).

The N-terminal catalytic PFK domain 1 stretch occupies residues 2 to 558; the sequence is PDASLFNGTS…HMKNFISTNS (557 aa). ATP contacts are provided by residues glycine 191, 255–256, and 285–288; these read RC and GDGS. Aspartate 286 contributes to the Mg(2+) binding site. Residues 331–333, arginine 368, 375–377, glutamate 432, arginine 460, and 466–469 each bind beta-D-fructose 6-phosphate; these read SID, MGR, and HVQR. Aspartate 333 serves as the catalytic Proton acceptor. The segment at 559 to 572 is interdomain linker; that stretch reads ADHVPPSLPLEKRK. Residues 573–941 are C-terminal regulatory PFK domain 2; that stretch reads KVAIINVGAP…SDMLSGRTSL (369 aa). Residues arginine 643, 701–705, arginine 739, 746–748, glutamate 806, lysine 832, 838–841, and arginine 918 contribute to the beta-D-fructose 2,6-bisphosphate site; these read TISNN, QGG, and HVQQ.

Belongs to the phosphofructokinase type A (PFKA) family. ATP-dependent PFK group I subfamily. Eukaryotic two domain clade 'E' sub-subfamily. Heterododecamer of 4 alpha, 4 beta and 4 gamma chains. The gamma chain bridges the N-terminal halves of the alpha and beta subunits. Mg(2+) is required as a cofactor.

It localises to the cytoplasm. The enzyme catalyses beta-D-fructose 6-phosphate + ATP = beta-D-fructose 1,6-bisphosphate + ADP + H(+). Its pathway is carbohydrate degradation; glycolysis; D-glyceraldehyde 3-phosphate and glycerone phosphate from D-glucose: step 3/4. With respect to regulation, allosterically activated by ADP, AMP, or fructose 2,6-bisphosphate, and allosterically inhibited by ATP or citrate. In terms of biological role, catalyzes the phosphorylation of D-fructose 6-phosphate to fructose 1,6-bisphosphate by ATP, the first committing step of glycolysis. The protein is ATP-dependent 6-phosphofructokinase subunit beta (PFK2) of Komagataella phaffii (strain GS115 / ATCC 20864) (Yeast).